The chain runs to 510 residues: Bifunctional purine biosynthesis protein PurH (510 aa).

Residues 1–143 (MTKRALISVS…KNHSGVLVLV (143 aa)) form the MGS-like domain.

The protein belongs to the PurH family.

It catalyses the reaction (6R)-10-formyltetrahydrofolate + 5-amino-1-(5-phospho-beta-D-ribosyl)imidazole-4-carboxamide = 5-formamido-1-(5-phospho-D-ribosyl)imidazole-4-carboxamide + (6S)-5,6,7,8-tetrahydrofolate. The catalysed reaction is IMP + H2O = 5-formamido-1-(5-phospho-D-ribosyl)imidazole-4-carboxamide. It functions in the pathway purine metabolism; IMP biosynthesis via de novo pathway; 5-formamido-1-(5-phospho-D-ribosyl)imidazole-4-carboxamide from 5-amino-1-(5-phospho-D-ribosyl)imidazole-4-carboxamide (10-formyl THF route): step 1/1. It participates in purine metabolism; IMP biosynthesis via de novo pathway; IMP from 5-formamido-1-(5-phospho-D-ribosyl)imidazole-4-carboxamide: step 1/1. The sequence is that of Bifunctional purine biosynthesis protein PurH from Deinococcus deserti (strain DSM 17065 / CIP 109153 / LMG 22923 / VCD115).